We begin with the raw amino-acid sequence, 453 residues long: GTPase Der (453 aa).

EngA-type G domains are found at residues 4 to 169 (PIVA…PTQG) and 177 to 352 (TKIA…NEYQ). Residues 10–17 (GRPNVGKS), 57–61 (DTGGL), 120–123 (NKCE), 183–190 (GRPNVGKS), 230–234 (DTAGI), and 295–298 (NKWD) contribute to the GTP site. Residues 353–438 (RRVTTSVINE…PIRLLWRGKK (86 aa)) enclose the KH-like domain.

Belongs to the TRAFAC class TrmE-Era-EngA-EngB-Septin-like GTPase superfamily. EngA (Der) GTPase family. Associates with the 50S ribosomal subunit.

Functionally, GTPase that plays an essential role in the late steps of ribosome biogenesis. The chain is GTPase Der from Trichodesmium erythraeum (strain IMS101).